The following is a 228-amino-acid chain: PKHD-type hydroxylase Rmet_3078 (228 aa).

Residues 80-180 form the Fe2OG dioxygenase domain; the sequence is IVYPPMFNRY…RVGCFFWIQS (101 aa). The Fe cation site is built by histidine 98, aspartate 100, and histidine 161. Residue arginine 171 participates in 2-oxoglutarate binding.

Requires Fe(2+) as cofactor. L-ascorbate serves as cofactor.

The sequence is that of PKHD-type hydroxylase Rmet_3078 from Cupriavidus metallidurans (strain ATCC 43123 / DSM 2839 / NBRC 102507 / CH34) (Ralstonia metallidurans).